The following is a 92-amino-acid chain: Phospholemman (92 aa).

The first 20 residues, 1–20 (MAYLHHTLLVCMGLLAMANA), serve as a signal peptide directing secretion. Residues 22-35 (APQEQDPFTYDYQS) are Extracellular-facing. Residues 36–56 (LRIGGLIIAGILFILGILIIL) traverse the membrane as a helical segment. The Cytoplasmic segment spans residues 57–92 (KRGAWERFDTARRTGEPDEEEGTFRSSIRRLSTRRR). Residues 67–92 (ARRTGEPDEEEGTFRSSIRRLSTRRR) are disordered. The residue at position 79 (Thr-79) is a Phosphothreonine. Ser-82 is subject to Phosphoserine. The residue at position 83 (Ser-83) is a Phosphoserine; by PKA and PKC. Over residues 83-92 (SIRRLSTRRR) the composition is skewed to basic residues. Position 88 is a phosphoserine; by PKA (Ser-88). At Thr-89 the chain carries Phosphothreonine; by PKC.

It belongs to the FXYD family. As to quaternary structure, homotetramer. Monomer. Regulatory subunit of the sodium/potassium-transporting ATPase (NKA) which is composed of a catalytic alpha subunit, a non-catalytic beta subunit and an additional regulatory subunit. The monomeric form associates with NKA while the oligomeric form does not. Interacts with the catalytic alpha-1 subunit ATP1A1. Also interacts with the catalytic alpha-2 and alpha-3 subunits ATP1A2 and ATP1A3. Very little interaction with ATP1A1, ATP1A2 or ATP1A3 when phosphorylated at Ser-83. Interacts with the non-catalytic beta-1 subunit ATP1B1. Oxidative stress decreases interaction with ATP1A1 but increases interaction with ATP1B1. Major plasma membrane substrate for cAMP-dependent protein kinase (PKA) and protein kinase C (PKC) in several different tissues. Phosphorylated in response to insulin and adrenergic stimulation. Phosphorylation at Ser-88 stimulates sodium/potassium-transporting ATPase activity while the unphosphorylated form inhibits sodium/potassium-transporting ATPase activity. Phosphorylation increases tetramerization, decreases binding to ATP1A1 and reduces inhibition of ATP1A1 activity. Phosphorylation at Ser-83 leads to greatly reduced interaction with ATP1A1, ATP1A2 and ATP1A3. May be phosphorylated by DMPK. Post-translationally, palmitoylation increases half-life and stability and is enhanced upon phosphorylation at Ser-88 by PKA. In terms of processing, glutathionylated. In terms of tissue distribution, expressed in ventricular myocytes (at protein level).

It localises to the cell membrane. The protein localises to the sarcolemma. It is found in the apical cell membrane. Its subcellular location is the membrane. The protein resides in the caveola. It localises to the T-tubule. Its function is as follows. Associates with and regulates the activity of the sodium/potassium-transporting ATPase (NKA) which transports Na(+) out of the cell and K(+) into the cell. Inhibits NKA activity in its unphosphorylated state and stimulates activity when phosphorylated. Reduces glutathionylation of the NKA beta-1 subunit ATP1B1, thus reversing glutathionylation-mediated inhibition of ATP1B1. Contributes to female sexual development by maintaining the excitability of neurons which secrete gonadotropin-releasing hormone. The protein is Phospholemman of Oryctolagus cuniculus (Rabbit).